The primary structure comprises 764 residues: Sesterfisherol synthase (764 aa).

The segment at 2–331 is terpene cyclase; it reads EVWEHSRPIA…SPRHHAWRNN (330 aa). Asp-95 provides a ligand contact to Mg(2+). Substrate is bound by residues Asp-95, 187 to 190, Asn-231, 235 to 239, and 324 to 325; these read RRDD, SFDRE, and RH. The DDXXD 1 motif lies at 95–99; sequence DDGYE. The NSE/DTE motif lies at 231 to 239; sequence NDYWSFDRE. The tract at residues 332 to 759 is prenyltransferase; that stretch reads SRNGLKPANH…PMLRLLLEKL (428 aa). The segment at 347 to 372 is disordered; that stretch reads LITPSNNLNSSKGSEEQMQDSDNGTR. A compositionally biased stretch (polar residues) spans 348–358; the sequence is ITPSNNLNSSK. The isopentenyl diphosphate site is built by Lys-476, Arg-479, and His-508. Mg(2+) is bound by residues Asp-515 and Asp-519. The DDXXD 2 motif lies at 515 to 519; sequence DDIED. A dimethylallyl diphosphate-binding site is contributed by Arg-524. Residue Arg-525 coordinates isopentenyl diphosphate. Residues Lys-602, Thr-603, Gln-638, Asn-645, Lys-655, and Lys-665 each contribute to the dimethylallyl diphosphate site.

In the N-terminal section; belongs to the terpene synthase family. This sequence in the C-terminal section; belongs to the FPP/GGPP synthase family. In terms of assembly, hexamer. Mg(2+) is required as a cofactor.

The catalysed reaction is isopentenyl diphosphate + (2E,6E)-farnesyl diphosphate = (2E,6E,10E)-geranylgeranyl diphosphate + diphosphate. The enzyme catalyses isopentenyl diphosphate + (2E,6E,10E)-geranylgeranyl diphosphate = (2E,6E,10E,14E)-geranylfarnesyl diphosphate + diphosphate. It carries out the reaction (2E,6E,10E,14E)-geranylfarnesyl diphosphate + H2O = sesterfisherol + diphosphate. Its pathway is secondary metabolite biosynthesis; terpenoid biosynthesis. In terms of biological role, bifunctional terpene synthase; part of the gene cluster that mediates the biosynthesis of sesterfisheric acid. The bifunctional terpene synthase NfSS converts dimethylallyl diphosphate (DMAPP) and isopentenyl diphosphate (IPP) into sesterfisherol. The C-terminal prenyltransferase (PT) domain of NfSS catalyzes formation of geranylfarnesyl pyrophosphate (GFPP), whereas the N-terminal terpene cyclase (TC) domain catalyzes the cyclization of GFPP to sesterfisherol. The cytochrome P450 monooxygenase NfP450 then catalyzes oxidative modifications of sesterfisherol into sesterfisheric acid. The sequence is that of Sesterfisherol synthase from Neosartorya fischeri (strain ATCC 1020 / DSM 3700 / CBS 544.65 / FGSC A1164 / JCM 1740 / NRRL 181 / WB 181) (Aspergillus fischerianus).